The primary structure comprises 261 residues: Indole-3-glycerol phosphate synthase (261 aa).

Belongs to the TrpC family.

The enzyme catalyses 1-(2-carboxyphenylamino)-1-deoxy-D-ribulose 5-phosphate + H(+) = (1S,2R)-1-C-(indol-3-yl)glycerol 3-phosphate + CO2 + H2O. It participates in amino-acid biosynthesis; L-tryptophan biosynthesis; L-tryptophan from chorismate: step 4/5. The polypeptide is Indole-3-glycerol phosphate synthase (Paraburkholderia phymatum (strain DSM 17167 / CIP 108236 / LMG 21445 / STM815) (Burkholderia phymatum)).